The sequence spans 304 residues: Elongation factor Ts (304 aa).

Positions 82-85 (TDFV) are involved in Mg(2+) ion dislocation from EF-Tu.

The protein belongs to the EF-Ts family.

It localises to the cytoplasm. Functionally, associates with the EF-Tu.GDP complex and induces the exchange of GDP to GTP. It remains bound to the aminoacyl-tRNA.EF-Tu.GTP complex up to the GTP hydrolysis stage on the ribosome. This chain is Elongation factor Ts, found in Symbiobacterium thermophilum (strain DSM 24528 / JCM 14929 / IAM 14863 / T).